A 351-amino-acid polypeptide reads, in one-letter code: N-formyl peptide receptor 2 (351 aa).

The Extracellular segment spans residues 1–27; sequence METNFSTPLNEYEEVSYESAGYTVLRI. N4 carries an N-linked (GlcNAc...) asparagine glycan. Residues 28-50 traverse the membrane as a helical segment; that stretch reads LPLVVLGVTFVLGVLGNGLVIWV. The Cytoplasmic segment spans residues 51–61; the sequence is AGFRMTRTVTT. A helical membrane pass occupies residues 62–83; sequence ICYLNLALADFSFTATLPFLIV. Residues 84–100 lie on the Extracellular side of the membrane; sequence SMAMGEKWPFGWFLCKL. A disulfide bridge links C98 with C176. Residues 101–121 traverse the membrane as a helical segment; the sequence is IHIVVDINLFGSVFLIGFIAL. Residues 122–140 lie on the Cytoplasmic side of the membrane; that stretch reads DRCICVLHPVWAQNHRTVS. A helical membrane pass occupies residues 141-162; that stretch reads LAMKVIVGPWILALVLTLPVFL. Residues 163–205 are Extracellular-facing; that stretch reads FLTTVTIPNGDTYCTFNFASWGGTPEERLKVAITMLTARGIIR. Residues 206–226 form a helical membrane-spanning segment; the sequence is FVIGFSLPMSIVAICYGLIAA. The Cytoplasmic segment spans residues 227-242; it reads KIHKKGMIKSSRPLRV. The chain crosses the membrane as a helical span at residues 243–266; sequence LTAVVASFFICWFPFQLVALLGTV. Topologically, residues 267–286 are extracellular; it reads WLKEMLFYGKYKIIDILVNP. A helical transmembrane segment spans residues 287 to 306; that stretch reads TSSLAFFNSCLNPMLYVFVG. At 307-351 the chain is on the cytoplasmic side; that stretch reads QDFRERLIHSLPTSLERALSEDSAPTNDTAANSASPPAETELQAM. A disordered region spans residues 325–351; sequence LSEDSAPTNDTAANSASPPAETELQAM. The segment covering 329-341 has biased composition (polar residues); that stretch reads SAPTNDTAANSAS.

This sequence belongs to the G-protein coupled receptor 1 family. Interacts with Amyloid-beta protein 42, product of APP; the interaction takes place at the cell surface and the complex is then rapidly internalized. In terms of assembly, (Microbial infection) Interacts with Staphylococcus aureus protein SSL13; this interaction leads to the activation of neutrophils. Detected in lung, bone marrow, neutrophils, spleen and testis.

Its subcellular location is the cell membrane. Its function is as follows. Low affinity receptor for N-formyl-methionyl peptides, which are powerful neutrophil chemotactic factors. Binding of FMLP to the receptor causes activation of neutrophils. This response is mediated via a G-protein that activates a phosphatidylinositol-calcium second messenger system. The activation of LXA4R could result in an anti-inflammatory outcome counteracting the actions of pro-inflammatory signals such as LTB4 (leukotriene B4). Receptor for the chemokine-like protein FAM19A5, mediating FAM19A5-stimulated macrophage chemotaxis and the inhibitory effect on TNFSF11/RANKL-induced osteoclast differentiation. Acts as a receptor for humanin. The polypeptide is N-formyl peptide receptor 2 (FPR2) (Homo sapiens (Human)).